Here is a 595-residue protein sequence, read N- to C-terminus: NADH-quinone oxidoreductase subunit C/D (595 aa).

Positions 1–186 (MAETDIAMPE…TPYMQNQAKQ (186 aa)) are NADH dehydrogenase I subunit C. The NADH dehydrogenase I subunit D stretch occupies residues 210-595 (DFMFLNLGPN…IDVVMADVDR (386 aa)).

In the N-terminal section; belongs to the complex I 30 kDa subunit family. The protein in the C-terminal section; belongs to the complex I 49 kDa subunit family. NDH-1 is composed of 13 different subunits. Subunits NuoB, CD, E, F, and G constitute the peripheral sector of the complex.

It localises to the cell inner membrane. The catalysed reaction is a quinone + NADH + 5 H(+)(in) = a quinol + NAD(+) + 4 H(+)(out). NDH-1 shuttles electrons from NADH, via FMN and iron-sulfur (Fe-S) centers, to quinones in the respiratory chain. The immediate electron acceptor for the enzyme in this species is believed to be ubiquinone. Couples the redox reaction to proton translocation (for every two electrons transferred, four hydrogen ions are translocated across the cytoplasmic membrane), and thus conserves the redox energy in a proton gradient. This is NADH-quinone oxidoreductase subunit C/D from Acinetobacter baylyi (strain ATCC 33305 / BD413 / ADP1).